A 512-amino-acid polypeptide reads, in one-letter code: ATP synthase subunit alpha (512 aa).

Gly169–Thr176 provides a ligand contact to ATP.

This sequence belongs to the ATPase alpha/beta chains family. In terms of assembly, F-type ATPases have 2 components, CF(1) - the catalytic core - and CF(0) - the membrane proton channel. CF(1) has five subunits: alpha(3), beta(3), gamma(1), delta(1), epsilon(1). CF(0) has three main subunits: a(1), b(2) and c(9-12). The alpha and beta chains form an alternating ring which encloses part of the gamma chain. CF(1) is attached to CF(0) by a central stalk formed by the gamma and epsilon chains, while a peripheral stalk is formed by the delta and b chains.

It is found in the cell inner membrane. It catalyses the reaction ATP + H2O + 4 H(+)(in) = ADP + phosphate + 5 H(+)(out). Its function is as follows. Produces ATP from ADP in the presence of a proton gradient across the membrane. The alpha chain is a regulatory subunit. This chain is ATP synthase subunit alpha, found in Azoarcus sp. (strain BH72).